A 324-amino-acid chain; its full sequence is Polycomb complex protein BMI-1 (324 aa).

The RING-type zinc-finger motif lies at 18–57; the sequence is CVLCGGYFIDATTIIECLHSFCKTCIVRYLETSKYCPICD. The Nuclear localization signal motif lies at 81–95; that stretch reads KLVPGLFKNEMKRRR. The interaction with PHC2 stretch occupies residues 160-180; sequence RYLRCPAAMTVMHLRKFLRSK. Residues 162 to 226 form an interaction with E4F1 region; the sequence is LRCPAAMTVM…GPLPLKYRVR (65 aa). The segment at 232–324 is disordered; that stretch reads MKMSHQRDGL…LNGSSATSSG (93 aa). Over residues 264–276 the composition is skewed to low complexity; that stretch reads PSTSSCLPSPSTP. Residues 277–307 show a composition bias toward polar residues; it reads VQSPHPQFPHISSTMNGTSNSPSANHQSSFA. Positions 313-324 are enriched in low complexity; sequence SSLNGSSATSSG.

In terms of assembly, component of a PRC1-like complex. Identified in a PRC1-like HPRC-H complex with CBX2, CBX4, CBX8, PHC1, PHC2, PHC3, RING1 and RNF2. Interacts with RNF2/RING2. Interacts with RING1. Part of a complex that contains RNF2, UB2D3 and BMI1, where RNF2 and BMI1 form a tight heterodimer, and UB2D3 interacts only with RNF2. The complex composed of RNF2, UB2D3 and BMI1 binds nucleosomes, and has activity only with nucleosomal histone H2A. Interacts with CBX7 and CBX8. Interacts with SPOP. Part of a complex consisting of BMI1, CUL3 and SPOP. Interacts with E4F1. Interacts with PHC2. Interacts with zinc finger protein ZNF277. May be part of a complex including at least ZNF277, BMI1 and RNF2/RING2. May be polyubiquitinated; which does not lead to proteasomal degradation. Monoubiquitinated. In terms of tissue distribution, detected in most organs with high expression levels in thymus, heart, brain and testis.

It localises to the nucleus. The protein localises to the cytoplasm. Functionally, component of a Polycomb group (PcG) multiprotein PRC1-like complex, a complex class required to maintain the transcriptionally repressive state of many genes, including Hox genes, throughout development. PcG PRC1 complex acts via chromatin remodeling and modification of histones; it mediates monoubiquitination of histone H2A 'Lys-119', rendering chromatin heritably changed in its expressibility. The complex composed of RNF2, UB2D3 and BMI1 binds nucleosomes, and has activity only with nucleosomal histone H2A. In the PRC1-like complex, regulates the E3 ubiquitin-protein ligase activity of RNF2/RING2. In Mus musculus (Mouse), this protein is Polycomb complex protein BMI-1 (Bmi1).